The sequence spans 1273 residues: Ras-specific guanine nucleotide-releasing factor 1 (1273 aa).

A PH 1 domain is found at 22–129 (DGTRKGYLSK…WVAAIAHASY (108 aa)). The 26-residue stretch at 204–229 (KKIKKVQSFLRGWLCRRKWKTIIQDY) folds into the IQ domain. A DH domain is found at 240-426 (KRNQVVFSML…EELSRIMHDE (187 aa)). Residues 467 to 584 (PMSEKGKITR…WTSDISQCVD (118 aa)) form the PH 2 domain. Phosphoserine; by PLK2 is present on residues serine 577 and serine 626. The N-terminal Ras-GEF domain maps to 644–761 (KVLQIRYASV…SRRRKLSLNI (118 aa)). The tract at residues 724–754 (YGEPPKSPRATRKFSSPPPLSITKTSSPSRR) is disordered. Position 758 is a phosphoserine (serine 758). Phosphoserine; by PLK2 is present on residues serine 779 and serine 800. The segment at 809-874 (TNKIPDEGDT…PKSVKNKNSS (66 aa)) is disordered. Residues 842-854 (SDIDQNQSDDGDT) are compositionally biased toward acidic residues. Residues 855–867 (ETSPTKSPTTPKS) are compositionally biased toward low complexity. Residues 1038 to 1270 (SALEIAEQLT…YESSLRIEPK (233 aa)) enclose the Ras-GEF domain.

In terms of assembly, homooligomer and heterooligomer with RASGRF2. Interacts with USP8, thereby regulating its stability. Post-translationally, phosphorylated by PLK2, leading to ubiquitination and degradation by the proteasome. In terms of processing, ubiquitinated and degraded following phosphorylation by PLK2. Phosphorylated by SRC and LCK. Phosphorylation by LCK increases its capacity to stimulate the GDP/GTP exchange on Ras, whereas its phosphorylation by SRC seems not to have an effect on stimulation activity.

Functionally, promotes the exchange of Ras-bound GDP by GTP. This Homo sapiens (Human) protein is Ras-specific guanine nucleotide-releasing factor 1 (RASGRF1).